Consider the following 502-residue polypeptide: Membrane protein insertase YidC (502 aa).

A run of 6 helical transmembrane segments spans residues 12-32, 286-306, 312-332, 382-402, 409-429, and 452-472; these read FLIF…FYIY, LDWG…YWIY, WVLS…PLGY, LPIL…IITV, FLWI…VIMG, and ITSV…VLYW.

It belongs to the OXA1/ALB3/YidC family. Type 1 subfamily. As to quaternary structure, interacts with the Sec translocase complex via SecD. Specifically interacts with transmembrane segments of nascent integral membrane proteins during membrane integration.

The protein resides in the cell membrane. In terms of biological role, required for the insertion and/or proper folding and/or complex formation of integral membrane proteins into the membrane. Involved in integration of membrane proteins that insert both dependently and independently of the Sec translocase complex, as well as at least some lipoproteins. Aids folding of multispanning membrane proteins. The sequence is that of Membrane protein insertase YidC from Aquifex aeolicus (strain VF5).